Consider the following 1498-residue polypeptide: MKPLAIPANHGVMGQQEKHSLPADFTKLHLTDSLHPQVTHVSSSHSGCSITSDSGSSSLSDIYQATESEAGDMDLSGLPETAVDSEDDDDEEDIERASDPLMSRDIVRDCLEKDPIDRTDDDIEQLLEFMHQLPAFANMTMSVRRELCAVMVFAVVERAGTIVLNDGEELDSWSVILNGSVEVTYPDGKAEILCMGNSFGVSPTMDKEYMKGVMRTKVDDCQFVCIAQQDYCRILNQVEKNMQKVEEEGEIVMVKEHRELDRTGTRKGHIVIKGTSERLTMHLVEEHSVVDPTFIEDFLLTYRTFLSSPMEVGKKLLEWFNDPSLRDKVTRVVLLWVNNHFNDFEGDPAMTRFLEEFENNLEREKMGGHLRLLNIACAAKAKRRLMTLTKPSREAPLPFILLGGSEKGFGIFVDSVDSGSKATEAGLKRGDQILEVNGQNFENIQLSKAMEILRNNTHLSITVKTNLFVFKELLTRLSEEKRNGAPHLPKIGDIKKASRYSIPDLAVDVEQVIGLEKVNKKSKANTVGGRNKLKKILDKTRISILPQKPYNDIGIGQSQDDSIVGLRQTKHIPTALPVSGTLSSSNPDLLQSHHRILDFSTTPDLPDQVLRVFKADQQSRYIMISKDTTAKEVVIQAIREFAVTATPDQYSLCEVSVTPEGVIKQRRLPDQLSKLADRIQLSGRYYLKNNMETETLCSDEDAQELLRESQISLLQLSTVEVATQLSMRNFELFRNIEPTEYIDDLFKLKSKTSCANLKKFEEVINQETFWVASEILRETNQLKRMKIIKHFIKIALHCRECKNFNSMFAIISGLNLAPVARLRTTWEKLPNKYEKLFQDLQDLFDPSRNMAKYRNVLNSQNLQPPIIPLFPVIKKDLTFLHEGNDSKVDGLVNFEKLRMIAKEIRHVGRMASVNMDPALMFRTRKKKWRSLGSLSQGSTNATVLDVAQTGGHKKRVRRSSFLNAKKLYEDAQMARKVKQYLSNLELEMDEESLQTLSLQCEPATNTLPKNPGDKKPVKSETSPVAPRAGSQQKAQAQPPPPQPQPQHKINQGLQVPAVSLYPSRKKVPVKDLPPFGINSPQALKKILSLSEEGSLERHKKQAEDTISNASSQLSSPPTSPQSSPRKGYTLAPSGTVDNFSDSGHSEISSRSSIVSNSSFDSVPVSLHEERRQRHSVSIVETNLGVGRMERRTMMEPDQYSLGSYAPMAESRGLYATATVISSPSTEELSQDQGDRASLDAADSGRGSWTSCSSGSHDNIQTIQHQRSWETLPFGHTHFDYSGDPAGLWASSSHMDQIMFSDHSTKYNRQNQSRESLEQAQSRASWASSTGYWGEDSEGDTGTIKRRGGKDVSIEAESSSVTSVTTEETKPVPMPAHVAVTSSTAKGLIVRKEGRYREPPPTPPGYIGIPITDFPEGHSHPARKPPDYNVALQRSRMVARPTDTAAPSPIQQPHGHPASGRPVNKPQWHKPNECDPRLAPYQSQGFSTEEDEDEQVSAV.

Disordered regions lie at residues 40 to 59 (HVSSSHSGCSITSDSGSSSL) and 68 to 101 (SEAGDMDLSGLPETAVDSEDDDDEEDIERASDPL). The span at 83-94 (VDSEDDDDEEDI) shows a compositional bias: acidic residues. An a nucleoside 3',5'-cyclic phosphate-binding site is contributed by 135 to 252 (AFANMTMSVR…QKVEEEGEIV (118 aa)). In terms of domain architecture, N-terminal Ras-GEF spans 267-380 (KGHIVIKGTS…RLLNIACAAK (114 aa)). One can recognise a PDZ domain in the interval 385 to 468 (LMTLTKPSRE…LSITVKTNLF (84 aa)). S501 bears the Phosphoserine mark. The region spanning 606–692 (PDQVLRVFKA…GRYYLKNNME (87 aa)) is the Ras-associating domain. The residue at position 644 (T644) is a Phosphothreonine. The Ras-GEF domain occupies 717-944 (STVEVATQLS…SQGSTNATVL (228 aa)). Phosphoserine is present on residues S806, S930, S933, S1022, S1079, S1088, S1094, S1115, S1119, S1158, and S1175. Residues 1002-1048 (PATNTLPKNPGDKKPVKSETSPVAPRAGSQQKAQAQPPPPQPQPQHK) are disordered. The tract at residues 1094-1159 (SLERHKKQAE…RSSIVSNSSF (66 aa)) is disordered. Composition is skewed to low complexity over residues 1110–1124 (SSQLSSPPTSPQSSP) and 1140–1159 (SDSGHSEISSRSSIVSNSSF). Disordered stretches follow at residues 1224-1257 (STEELSQDQGDRASLDAADSGRGSWTSCSSGSHD), 1304-1371 (TKYN…TKPV), and 1392-1498 (EGRY…VSAV). 2 stretches are compositionally biased toward polar residues: residues 1246–1257 (GSWTSCSSGSHD) and 1306–1330 (YNRQNQSRESLEQAQSRASWASSTG). Residues 1354–1365 (EAESSSVTSVTT) are compositionally biased toward low complexity. Acidic residues predominate over residues 1487-1498 (TEEDEDEQVSAV).

This sequence belongs to the RAPGEF2 family. In terms of assembly, found in a complex, at least composed of KIDINS220, MAGI2, NTRK1 and RAPGEF2; the complex is mainly formed at late endosomes in a neuronal growth factor (NGF)-dependent manner. Interacts (via C-terminal domain) with NEDD4 (via WW domains); this interaction leads to ubiquitination and degradation via the proteasome pathway in a cAMP-independent manner. Interacts with MAGI1 (via PDZ domain). Interacts with ADRB1 (via C-terminal PDZ motif); the interaction is direct. Interacts (via Ras-associating domain) with RAP1A (via GTP-bound active form). Interacts weakly with HRAS (via GDP- and GTP-bound forms). Interacts (via C-terminal domain) with MAGI2 (via PDZ and WW domains). Interacts with CDH1, CTNNB1 and TJP1. In terms of processing, ubiquitinated by NEDD4, leading to proteasomal degradation. Phosphorylation by PLK2 promotes its activity.

Its subcellular location is the cell junction. It localises to the cytoplasm. It is found in the perinuclear region. The protein localises to the cell membrane. The protein resides in the late endosome. In terms of biological role, functions as a guanine nucleotide exchange factor (GEF), which activates Rap and Ras family of small GTPases by exchanging bound GDP for free GTP in a cAMP-dependent manner. Serves as a link between cell surface receptors and Rap/Ras GTPases in intracellular signaling cascades. Also acts as an effector for Rap1 by direct association with Rap1-GTP thereby leading to the amplification of Rap1-mediated signaling. Shows weak activity on HRAS. It is controversial whether RAPGEF2 binds cAMP and cGMP or not. Its binding to ligand-activated beta-1 adrenergic receptor ADRB1 leads to the Ras activation through the G(s)-alpha signaling pathway. Involved in the cAMP-induced Ras and Erk1/2 signaling pathway that leads to sustained inhibition of long term melanogenesis by reducing dendrite extension and melanin synthesis. Also provides inhibitory signals for cell proliferation of melanoma cells and promotes their apoptosis in a cAMP-independent nanner. Regulates cAMP-induced neuritogenesis by mediating the Rap1/B-Raf/ERK signaling through a pathway that is independent on both PKA and RAPGEF3/RAPGEF4. Involved in neuron migration and in the formation of the major forebrain fiber connections forming the corpus callosum, the anterior commissure and the hippocampal commissure during brain development. Involved in neuronal growth factor (NGF)-induced sustained activation of Rap1 at late endosomes and in brain-derived neurotrophic factor (BDNF)-induced axon outgrowth of hippocampal neurons. Plays a role in the regulation of embryonic blood vessel formation and in the establishment of basal junction integrity and endothelial barrier function. May be involved in the regulation of the vascular endothelial growth factor receptor KDR and cadherin CDH5 expression at allantois endothelial cell-cell junctions. The polypeptide is Rap guanine nucleotide exchange factor 2 (RAPGEF2) (Canis lupus familiaris (Dog)).